Consider the following 210-residue polypeptide: Outer-membrane lipoprotein LolB (210 aa).

The signal sequence occupies residues 1-18 (MKKFTKILSLSTLLFLAG). Cysteine 19 carries the N-palmitoyl cysteine lipid modification. Cysteine 19 carries the S-diacylglycerol cysteine lipid modification.

Belongs to the LolB family. As to quaternary structure, monomer.

The protein localises to the cell outer membrane. Plays a critical role in the incorporation of lipoproteins in the outer membrane after they are released by the LolA protein. The protein is Outer-membrane lipoprotein LolB of Actinobacillus pleuropneumoniae serotype 7 (strain AP76).